Consider the following 191-residue polypeptide: Orotate phosphoribosyltransferase (191 aa).

114–122 (EDVVTTGKS) contacts 5-phospho-alpha-D-ribose 1-diphosphate. 2 residues coordinate orotate: T118 and R146.

The protein belongs to the purine/pyrimidine phosphoribosyltransferase family. PyrE subfamily. As to quaternary structure, homodimer. Mg(2+) serves as cofactor.

The catalysed reaction is orotidine 5'-phosphate + diphosphate = orotate + 5-phospho-alpha-D-ribose 1-diphosphate. It participates in pyrimidine metabolism; UMP biosynthesis via de novo pathway; UMP from orotate: step 1/2. Its function is as follows. Catalyzes the transfer of a ribosyl phosphate group from 5-phosphoribose 1-diphosphate to orotate, leading to the formation of orotidine monophosphate (OMP). This is Orotate phosphoribosyltransferase from Clostridium botulinum (strain ATCC 19397 / Type A).